A 496-amino-acid chain; its full sequence is Angiopoietin-2 (496 aa).

The signal sequence occupies residues 1–18; sequence MWQIIFLTFGWDLVLASA. 6 N-linked (GlcNAc...) asparagine glycosylation sites follow: Asn-89, Asn-119, Asn-133, Asn-151, Asn-240, and Asn-304. The stretch at 159–256 forms a coiled coil; it reads QLLQHSISTN…QQHDLMETVN (98 aa). The Fibrinogen C-terminal domain maps to 275-495; sequence KEEQTTFRDC…ATTMMIRPAD (221 aa). Residues Cys-284 and Cys-313 are joined by a disulfide bond. The Ca(2+) site is built by Asp-429, Asp-431, Cys-433, and Cys-435. 2 disulfides stabilise this stretch: Cys-433–Cys-435 and Cys-437–Cys-450.

As to quaternary structure, interacts with TEK/TIE2, competing for the same binding site as ANGPT1. Interacts with ITGA5. Interacts with SVEP1/polydom. Interacts with THBD; this interaction significantly inhibits the generation of activated PC and TAFIa/CPB2 by the thrombin/thrombomodulin complex. Expressed in the ovary, uterus and placenta.

The protein localises to the secreted. In terms of biological role, binds to TEK/TIE2, competing for the ANGPT1 binding site, and modulating ANGPT1 signaling. Can induce tyrosine phosphorylation of TEK/TIE2 in the absence of ANGPT1. In the absence of angiogenic inducers, such as VEGF, ANGPT2-mediated loosening of cell-matrix contacts may induce endothelial cell apoptosis with consequent vascular regression. In concert with VEGF, it may facilitate endothelial cell migration and proliferation, thus serving as a permissive angiogenic signal. Involved in the regulation of lymphangiogenesis. This is Angiopoietin-2 (Angpt2) from Mus musculus (Mouse).